The following is a 185-amino-acid chain: MIEVGDLKKGMFIIYDGEIYRVLEASKHFMGRGSGLIRTKLKNVKTGFVREVNFPSGEKVQEAELSFRKAQYLYRDGDHYYFMTLDDYEQYALSEEEIGDAKYYLVENMEVDLVFHEGTPIGIELPTTVELTVVETEPSFKGDTVSGGGKPAVLETGLKITVPYFIEVGDKIKVDTRTGEYVGRA.

This sequence belongs to the elongation factor P family.

The protein resides in the cytoplasm. It functions in the pathway protein biosynthesis; polypeptide chain elongation. Its function is as follows. Involved in peptide bond synthesis. Stimulates efficient translation and peptide-bond synthesis on native or reconstituted 70S ribosomes in vitro. Probably functions indirectly by altering the affinity of the ribosome for aminoacyl-tRNA, thus increasing their reactivity as acceptors for peptidyl transferase. The polypeptide is Elongation factor P (efp) (Thermotoga maritima (strain ATCC 43589 / DSM 3109 / JCM 10099 / NBRC 100826 / MSB8)).